The following is a 478-amino-acid chain: Ribosome biogenesis protein NOP53 (478 aa).

Positions 1–10 are enriched in gly residues; sequence MAAGGSGVGG. Positions 1 to 51 are disordered; it reads MAAGGSGVGGKRSSKSDADSGFLGLRPTSVDPALRRRRRGPRNKKRGWRRL. Position 2 is an N-acetylalanine (Ala-2). Residue Ser-29 is modified to Phosphoserine. Over residues 35–49 the composition is skewed to basic residues; it reads RRRRRGPRNKKRGWR. Residues Ser-93 and Ser-305 each carry the phosphoserine modification. The mediates interaction with CDKN2A/isoform tumor suppressor ARF stretch occupies residues 148-431; the sequence is KEQLWEKLAK…SELTDSLRTL (284 aa). Residues 181 to 478 are mediates interaction with NF2; it reads KPGPQDTVER…EKRAFREIQL (298 aa). Residues 303-344 form a disordered region; the sequence is EESDGEGEPGQGEGPEAGDAEVCPTPARLATTEKKTEQQRRR. Residues 333–342 are compositionally biased toward basic and acidic residues; it reads TTEKKTEQQR. The interval 342-386 is mediates interaction with human herpesvirus 8 protein ORF16; that stretch reads RRREKAVHRLRVQQAALRAARLRHQELFRLRGIKAQVALRLAELA. Nucleolar localization signal stretches follow at residues 347-395 and 396-478; these read AVHR…RQAR and REAE…EIQL.

The protein belongs to the NOP53 family. In terms of assembly, homooligomer. Interacts with PTEN; regulates PTEN phosphorylation and increases its stability. Interacts with RPL11; retains RPL11 into the nucleolus. Interacts with CDKN2A/isoform tumor suppressor ARF; the interaction is direct and promotes ARF nucleoplasmic relocalization and ubiquitin-mediated proteasomal degradation. Interacts with NPM1; the interaction is direct and competitive with MYC. Interacts with NF2 (via FERM domain); the interaction is direct. Interacts with p53/TP53 (via the oligomerization region); the interaction is direct and may prevent the MDM2-mediated proteasomal degradation of p53/TP53. Interacts with RIGI; may regulate RIGI through USP15-mediated 'Lys-63'-linked deubiquitination. Interacts with UBTF. (Microbial infection) Interacts with herpes simplex virus 1 early proteins ICP22 and ICP0. As to quaternary structure, (Microbial infection) Interacts with Human herpesvirus 8 protein ORF16; may sequester ORF16 in host nucleolus and reduce its antiapoptotic activity. In terms of processing, ubiquitin-mediated proteasomal degradation is regulated by c-JUN. It is associated with relocalization to the nucleoplasm and decreased homooligomerization. Phosphorylated upon DNA damage probably by ATM and DNA-PK; may regulate NOP53 degradation. Expressed at high levels in heart and pancreas, moderate levels in placenta, liver, skeletal muscle, and kidney, and low levels in brain and lung.

It is found in the nucleus. Its subcellular location is the nucleolus. The protein resides in the nucleoplasm. Nucleolar protein which is involved in the integration of the 5S RNP into the ribosomal large subunit during ribosome biogenesis. In ribosome biogenesis, may also play a role in rRNA transcription. Also functions as a nucleolar sensor that regulates the activation of p53/TP53 in response to ribosome biogenesis perturbation, DNA damage and other stress conditions. DNA damage or perturbation of ribosome biogenesis disrupt the interaction between NOP53 and RPL11 allowing RPL11 transport to the nucleoplasm where it can inhibit MDM2 and allow p53/TP53 activation. It may also positively regulate the function of p53/TP53 in cell cycle arrest and apoptosis through direct interaction, preventing its MDM2-dependent ubiquitin-mediated proteasomal degradation. Originally identified as a tumor suppressor, it may also play a role in cell proliferation and apoptosis by positively regulating the stability of PTEN, thereby antagonizing the PI3K-AKT/PKB signaling pathway. May also inhibit cell proliferation and increase apoptosis through its interaction with NF2. May negatively regulate NPM1 by regulating its nucleoplasmic localization, oligomerization and ubiquitin-mediated proteasomal degradation. Thereby, may prevent NPM1 interaction with MYC and negatively regulate transcription mediated by the MYC-NPM1 complex. May also regulate cellular aerobic respiration. In the cellular response to viral infection, may play a role in the attenuation of interferon-beta through the inhibition of RIGI. This Homo sapiens (Human) protein is Ribosome biogenesis protein NOP53.